Here is a 924-residue protein sequence, read N- to C-terminus: TBC1 domain family member 2A (924 aa).

Residues 1–38 (MEDTPERTPSSESIQPPGLAREPEVTSPGDSEGCARPL) are disordered. Residues 1–167 (MEDTPERTPS…TENGPTLHLK (167 aa)) are interaction with CADH1. Residues 42–140 (PKKLCGYLSK…WLQQLQMKRW (99 aa)) form the PH domain. The interval 228-296 (KQAQATAHGP…KRQSNTFPFF (69 aa)) is disordered. Over residues 261–270 (IPEKEPEDPP) the composition is skewed to basic and acidic residues. Positions 297 to 435 (SDGLARSRTA…KLTEDLAQPQ (139 aa)) are interaction with RAC1. Coiled-coil stretches lie at residues 303-332 (SRTAQEKVVALEQQVLMLTKELKSQKELVI), 361-418 (LELV…AKQQ), and 444-477 (FLSQQERLEHLKDDMEAYRTQNRFLNSEIHQVTK). In terms of domain architecture, Rab-GAP TBC spans 621 to 813 (GVPREHRPRV…RVWDAFLYEG (193 aa)). Residues 871 to 906 (MKQLRQLRAAHRERLEAELRELELLKAEYLERRASR) are a coiled coil. At Ser-916 the chain carries Phosphoserine.

In terms of assembly, interacts with activated RAC1 and CDH1.

The protein localises to the cytoplasm. Its subcellular location is the cytoplasmic vesicle. It is found in the cell junction. Functionally, acts as a GTPase-activating protein for RAB7A. Signal effector acting as a linker between RAC1 and RAB7A, leading to RAB7A inactivation and subsequent inhibition of cadherin degradation and reduced cell-cell adhesion. The chain is TBC1 domain family member 2A (Tbc1d2) from Rattus norvegicus (Rat).